The sequence spans 167 residues: Probable chemoreceptor glutamine deamidase CheD (167 aa).

Belongs to the CheD family.

It carries out the reaction L-glutaminyl-[protein] + H2O = L-glutamyl-[protein] + NH4(+). Functionally, probably deamidates glutamine residues to glutamate on methyl-accepting chemotaxis receptors (MCPs), playing an important role in chemotaxis. The polypeptide is Probable chemoreceptor glutamine deamidase CheD (Moorella thermoacetica (strain ATCC 39073 / JCM 9320)).